The chain runs to 90 residues: Small ribosomal subunit protein uS15c (90 aa).

Belongs to the universal ribosomal protein uS15 family. In terms of assembly, part of the 30S ribosomal subunit.

It localises to the plastid. The protein localises to the chloroplast. The chain is Small ribosomal subunit protein uS15c (rps15) from Citrus sinensis (Sweet orange).